The primary structure comprises 347 residues: DnaJ homolog subfamily C member 22 (347 aa).

Positions 4–50 (GLLMTYTLWAVGGPAGLHHLYLGRDSHALLWMLTLGGGGLGWLWEFW) constitute a TM2 domain. A run of 7 helical transmembrane segments spans residues 5-25 (LLMTYTLWAVGGPAGLHHLYL), 32-52 (LLWMLTLGGGGLGWLWEFWML), 81-101 (FVAQMIVGMYFGLVALISLSF), 105-125 (FYIVGLPLAVGLGVLLVAAVG), 135-155 (LGAAFLTSPIFYGRPIAILPI), 186-206 (GLAYLAFTGPLVHSVLCHTAV), and 218-238 (FLSWFSFFPLLGRLLESVLLL). Residues 277–347 (LALQVFGLSE…GSWRWEETSF (71 aa)) enclose the J domain.

It localises to the membrane. Functionally, may function as a co-chaperone. The protein is DnaJ homolog subfamily C member 22 (DNAJC22) of Bos taurus (Bovine).